The following is a 285-amino-acid chain: 2-dehydro-3-deoxyphosphooctonate aldolase (285 aa).

The protein belongs to the KdsA family.

It localises to the cytoplasm. It carries out the reaction D-arabinose 5-phosphate + phosphoenolpyruvate + H2O = 3-deoxy-alpha-D-manno-2-octulosonate-8-phosphate + phosphate. The protein operates within carbohydrate biosynthesis; 3-deoxy-D-manno-octulosonate biosynthesis; 3-deoxy-D-manno-octulosonate from D-ribulose 5-phosphate: step 2/3. Its pathway is bacterial outer membrane biogenesis; lipopolysaccharide biosynthesis. In Verminephrobacter eiseniae (strain EF01-2), this protein is 2-dehydro-3-deoxyphosphooctonate aldolase.